A 352-amino-acid chain; its full sequence is tRNA pseudouridine synthase D (352 aa).

The active-site Nucleophile is Asp-78. The TRUD domain maps to 153 to 299 (GVPNYYGEQR…LDQDRRPLLL (147 aa)).

It belongs to the pseudouridine synthase TruD family.

It carries out the reaction uridine(13) in tRNA = pseudouridine(13) in tRNA. Its function is as follows. Responsible for synthesis of pseudouridine from uracil-13 in transfer RNAs. This chain is tRNA pseudouridine synthase D, found in Aeromonas salmonicida (strain A449).